The sequence spans 30 residues: Dermaseptin-3.4TR (30 aa).

As to expression, expressed by the skin glands.

The protein resides in the secreted. In terms of biological role, has antimicrobial activity. This Phyllomedusa trinitatis (Trinidad leaf frog) protein is Dermaseptin-3.4TR.